Consider the following 62-residue polypeptide: Large ribosomal subunit protein eL19 (62 aa).

Belongs to the eukaryotic ribosomal protein eL19 family.

This chain is Large ribosomal subunit protein eL19 (RPL19), found in Zea mays (Maize).